The primary structure comprises 655 residues: uncharacterized protein (655 aa).

The N-terminal stretch at 1 to 23 (MKRTIKYLSFLGLIPFLSITTIS) is a signal peptide. The N-palmitoyl cysteine moiety is linked to residue Cys24. Cys24 is lipidated: S-diacylglycerol cysteine.

The protein belongs to the MG067/MG068/MG395 family.

The protein localises to the cell membrane. This is an uncharacterized protein from Mycoplasma capricolum subsp. capricolum (strain California kid / ATCC 27343 / NCTC 10154).